Here is a 155-residue protein sequence, read N- to C-terminus: 3-dehydroquinate dehydratase (155 aa).

Tyrosine 22 (proton acceptor) is an active-site residue. Substrate is bound by residues asparagine 73, histidine 79, and aspartate 86. Histidine 99 serves as the catalytic Proton donor. Residues isoleucine 100–serine 101 and arginine 110 contribute to the substrate site.

This sequence belongs to the type-II 3-dehydroquinase family. Homododecamer.

It catalyses the reaction 3-dehydroquinate = 3-dehydroshikimate + H2O. The protein operates within metabolic intermediate biosynthesis; chorismate biosynthesis; chorismate from D-erythrose 4-phosphate and phosphoenolpyruvate: step 3/7. Catalyzes a trans-dehydration via an enolate intermediate. The chain is 3-dehydroquinate dehydratase from Campylobacter hominis (strain ATCC BAA-381 / DSM 21671 / CCUG 45161 / LMG 19568 / NCTC 13146 / CH001A).